We begin with the raw amino-acid sequence, 108 residues long: UPF0060 membrane protein Nwi_1459 (108 aa).

4 helical membrane passes run 5 to 25 (AAYVGAAIAEIAGCFAFWAWL), 31 to 51 (VWWLVPGMASLALFAYLLTLV), 61 to 81 (AAYGGIYIMASLGWLWSVEGI), and 88 to 108 (LAGALICLIGAVVILIGPHEI).

It belongs to the UPF0060 family.

It is found in the cell inner membrane. The protein is UPF0060 membrane protein Nwi_1459 of Nitrobacter winogradskyi (strain ATCC 25391 / DSM 10237 / CIP 104748 / NCIMB 11846 / Nb-255).